The following is a 335-amino-acid chain: Probable deoxyhypusine synthase (335 aa).

K307 acts as the Nucleophile in catalysis.

Belongs to the deoxyhypusine synthase family. Requires NAD(+) as cofactor.

It carries out the reaction [eIF5A protein]-L-lysine + spermidine = [eIF5A protein]-deoxyhypusine + propane-1,3-diamine. The protein operates within protein modification; eIF5A hypusination. Catalyzes the NAD-dependent oxidative cleavage of spermidine and the subsequent transfer of the butylamine moiety of spermidine to the epsilon-amino group of a specific lysine residue of the eIF-5A precursor protein to form the intermediate deoxyhypusine residue. The sequence is that of Probable deoxyhypusine synthase (dys) from Pyrococcus abyssi (strain GE5 / Orsay).